A 261-amino-acid chain; its full sequence is Pimeloyl-[acyl-carrier protein] methyl ester esterase (261 aa).

An AB hydrolase-1 domain is found at 16–241 (LVLIHGWGMN…QASHAPFISH (226 aa)). Substrate-binding positions include Trp22, 82-83 (SL), and 143-147 (FMTLQ). The Nucleophile role is filled by Ser82. Catalysis depends on residues Asp207 and His235. His235 provides a ligand contact to substrate.

This sequence belongs to the AB hydrolase superfamily. Carboxylesterase BioH family. Monomer.

It localises to the cytoplasm. The catalysed reaction is 6-carboxyhexanoyl-[ACP] methyl ester + H2O = 6-carboxyhexanoyl-[ACP] + methanol + H(+). Its pathway is cofactor biosynthesis; biotin biosynthesis. The physiological role of BioH is to remove the methyl group introduced by BioC when the pimeloyl moiety is complete. It allows to synthesize pimeloyl-ACP via the fatty acid synthetic pathway through the hydrolysis of the ester bonds of pimeloyl-ACP esters. The sequence is that of Pimeloyl-[acyl-carrier protein] methyl ester esterase from Aliivibrio salmonicida (strain LFI1238) (Vibrio salmonicida (strain LFI1238)).